The sequence spans 336 residues: Holliday junction branch migration complex subunit RuvB (336 aa).

Positions 1–185 (MSIIVERLLS…FGVLSRVEYY (185 aa)) are large ATPase domain (RuvB-L). Residues L24, R25, G66, K69, T70, T71, 132 to 134 (EDF), R175, Y185, and R222 each bind ATP. Mg(2+) is bound at residue T70. Positions 186–256 (TVDQLSAIVE…ITQMALELLQ (71 aa)) are small ATPAse domain (RuvB-S). The head domain (RuvB-H) stretch occupies residues 259 to 336 (KLGLDHIDHK…EHFGMEIPKV (78 aa)). 2 residues coordinate DNA: R314 and R319.

The protein belongs to the RuvB family. In terms of assembly, homohexamer. Forms an RuvA(8)-RuvB(12)-Holliday junction (HJ) complex. HJ DNA is sandwiched between 2 RuvA tetramers; dsDNA enters through RuvA and exits via RuvB. An RuvB hexamer assembles on each DNA strand where it exits the tetramer. Each RuvB hexamer is contacted by two RuvA subunits (via domain III) on 2 adjacent RuvB subunits; this complex drives branch migration. In the full resolvosome a probable DNA-RuvA(4)-RuvB(12)-RuvC(2) complex forms which resolves the HJ.

The protein resides in the cytoplasm. The catalysed reaction is ATP + H2O = ADP + phosphate + H(+). Functionally, the RuvA-RuvB-RuvC complex processes Holliday junction (HJ) DNA during genetic recombination and DNA repair, while the RuvA-RuvB complex plays an important role in the rescue of blocked DNA replication forks via replication fork reversal (RFR). RuvA specifically binds to HJ cruciform DNA, conferring on it an open structure. The RuvB hexamer acts as an ATP-dependent pump, pulling dsDNA into and through the RuvAB complex. RuvB forms 2 homohexamers on either side of HJ DNA bound by 1 or 2 RuvA tetramers; 4 subunits per hexamer contact DNA at a time. Coordinated motions by a converter formed by DNA-disengaged RuvB subunits stimulates ATP hydrolysis and nucleotide exchange. Immobilization of the converter enables RuvB to convert the ATP-contained energy into a lever motion, pulling 2 nucleotides of DNA out of the RuvA tetramer per ATP hydrolyzed, thus driving DNA branch migration. The RuvB motors rotate together with the DNA substrate, which together with the progressing nucleotide cycle form the mechanistic basis for DNA recombination by continuous HJ branch migration. Branch migration allows RuvC to scan DNA until it finds its consensus sequence, where it cleaves and resolves cruciform DNA. The sequence is that of Holliday junction branch migration complex subunit RuvB from Bacillus cereus (strain ATCC 14579 / DSM 31 / CCUG 7414 / JCM 2152 / NBRC 15305 / NCIMB 9373 / NCTC 2599 / NRRL B-3711).